The sequence spans 315 residues: tRNA-dihydrouridine(16) synthase (315 aa).

Residues 7 to 9 (PME) and Gln-68 each bind FMN. The Proton donor role is filled by Cys-98. Residues Lys-139, 200–202 (NGE), and 224–225 (GR) each bind FMN.

The protein belongs to the Dus family. DusC subfamily. FMN is required as a cofactor.

It catalyses the reaction 5,6-dihydrouridine(16) in tRNA + NADP(+) = uridine(16) in tRNA + NADPH + H(+). It carries out the reaction 5,6-dihydrouridine(16) in tRNA + NAD(+) = uridine(16) in tRNA + NADH + H(+). Catalyzes the synthesis of 5,6-dihydrouridine (D), a modified base found in the D-loop of most tRNAs, via the reduction of the C5-C6 double bond in target uridines. DusC specifically modifies U16 in tRNAs. This chain is tRNA-dihydrouridine(16) synthase, found in Escherichia coli (strain K12).